A 347-amino-acid chain; its full sequence is Large ribosomal subunit protein uL10 (347 aa).

A disordered region spans residues 312 to 347 (AAAPAEEEVKKEEEPEEEEEDHAEEDGMAGLGALFG). The segment covering 325-338 (EPEEEEEDHAEEDG) has biased composition (acidic residues).

The protein belongs to the universal ribosomal protein uL10 family. As to quaternary structure, part of the 50S ribosomal subunit. Forms part of the ribosomal stalk which helps the ribosome interact with GTP-bound translation factors. Forms a heptameric L10(L12)2(L12)2(L12)2 complex, where L10 forms an elongated spine to which the L12 dimers bind in a sequential fashion.

In terms of biological role, forms part of the ribosomal stalk, playing a central role in the interaction of the ribosome with GTP-bound translation factors. This chain is Large ribosomal subunit protein uL10, found in Methanosarcina acetivorans (strain ATCC 35395 / DSM 2834 / JCM 12185 / C2A).